The chain runs to 318 residues: 2-keto-3-deoxygluconate permease (318 aa).

Helical transmembrane passes span 10-30, 42-62, 82-102, 109-129, 139-159, 163-183, 201-221, 224-244, 257-277, and 288-308; these read LPGG…TLWP, GLIS…GATI, IAVA…GGIP, LSVL…YAAL, AGAV…LILG, LATF…LGFA, TLVP…TIVH, ASGV…LLLA, VAAS…AGMA, and TALV…LTAL.

This sequence belongs to the KdgT transporter family.

The protein localises to the cell inner membrane. It carries out the reaction 2-dehydro-3-deoxy-D-gluconate(in) + H(+)(in) = 2-dehydro-3-deoxy-D-gluconate(out) + H(+)(out). Functionally, catalyzes the proton-dependent uptake of 2-keto-3-deoxygluconate (KDG) into the cell. The protein is 2-keto-3-deoxygluconate permease of Xanthomonas oryzae pv. oryzae (strain MAFF 311018).